The primary structure comprises 207 residues: Thymidine kinase (207 aa).

ATP-binding positions include 15 to 22 and 88 to 91; these read GSMFSGKS and DEVQ. Glu89 acts as the Proton acceptor in catalysis. 4 residues coordinate Zn(2+): Cys145, Cys148, Cys183, and His186.

This sequence belongs to the thymidine kinase family. Homotetramer.

The protein resides in the cytoplasm. The catalysed reaction is thymidine + ATP = dTMP + ADP + H(+). This Oceanobacillus iheyensis (strain DSM 14371 / CIP 107618 / JCM 11309 / KCTC 3954 / HTE831) protein is Thymidine kinase.